We begin with the raw amino-acid sequence, 294 residues long: MKDRADAAARDRYAVAGHPVEHSRSPFIHARFAALTGEPIDYGRLPCPLDGFAATVSAFAASTGTGLGPARGCNVTVPFKFEAVALAAQLTPRAALAQAANTLRFDAEGWQADNTDGAGLVRDITVHAGVALQGATLLLVGAGGAAAGVLGPLLETGPQRLVLANRSPDRARTLVERHAALAALHGVTLEAAALDDCGDGYDIVVNATAASLAGATVPVTARVLRPGALALDMMYGPAAQGFLRWAAAHGAHGRDGLGMLVEQAAESFWFWRGVRPPTPAVLAELRAVIEGADT.

Shikimate contacts are provided by residues 23–25 (SRS) and Thr-76. Lys-80 (proton acceptor) is an active-site residue. Residues Asn-101 and Asp-116 each contribute to the shikimate site. NADP(+) is bound by residues 141-145 (GAGGA) and Met-233. Tyr-235 serves as a coordination point for shikimate. Gly-256 provides a ligand contact to NADP(+).

It belongs to the shikimate dehydrogenase family. Homodimer.

The enzyme catalyses shikimate + NADP(+) = 3-dehydroshikimate + NADPH + H(+). It functions in the pathway metabolic intermediate biosynthesis; chorismate biosynthesis; chorismate from D-erythrose 4-phosphate and phosphoenolpyruvate: step 4/7. Its function is as follows. Involved in the biosynthesis of the chorismate, which leads to the biosynthesis of aromatic amino acids. Catalyzes the reversible NADPH linked reduction of 3-dehydroshikimate (DHSA) to yield shikimate (SA). In Methylibium petroleiphilum (strain ATCC BAA-1232 / LMG 22953 / PM1), this protein is Shikimate dehydrogenase (NADP(+)).